The following is a 154-amino-acid chain: Transcriptional repressor NrdR (154 aa).

A zinc finger lies at 3–34 (CPFCGAHDTKVIDSRLVAEGDQVRRRRECLAC). Positions 49 to 139 (PRLIKQDGSR…VYRRFQDLNE (91 aa)) constitute an ATP-cone domain.

Belongs to the NrdR family. Requires Zn(2+) as cofactor.

Its function is as follows. Negatively regulates transcription of bacterial ribonucleotide reductase nrd genes and operons by binding to NrdR-boxes. In Pseudomonas aeruginosa (strain LESB58), this protein is Transcriptional repressor NrdR.